A 438-amino-acid polypeptide reads, in one-letter code: UDP-N-acetylmuramoylalanine--D-glutamate ligase (438 aa).

112–118 (GSNGKST) is a binding site for ATP.

This sequence belongs to the MurCDEF family.

It is found in the cytoplasm. It catalyses the reaction UDP-N-acetyl-alpha-D-muramoyl-L-alanine + D-glutamate + ATP = UDP-N-acetyl-alpha-D-muramoyl-L-alanyl-D-glutamate + ADP + phosphate + H(+). It participates in cell wall biogenesis; peptidoglycan biosynthesis. Functionally, cell wall formation. Catalyzes the addition of glutamate to the nucleotide precursor UDP-N-acetylmuramoyl-L-alanine (UMA). The sequence is that of UDP-N-acetylmuramoylalanine--D-glutamate ligase from Salmonella typhi.